Consider the following 130-residue polypeptide: Small ribosomal subunit protein uS9 (130 aa).

The protein belongs to the universal ribosomal protein uS9 family.

This Vibrio vulnificus (strain CMCP6) protein is Small ribosomal subunit protein uS9.